Here is a 1025-residue protein sequence, read N- to C-terminus: Kinesin-like protein KIN-14P (1025 aa).

Disordered regions lie at residues 1–87 (MNPM…MHHG) and 263–286 (YSQIESQTKTEKSKWEEQKKNEEE). Residues 15–28 (STPRSPFSPFSPLS) are compositionally biased toward low complexity. Residues 29–41 (VDDRHRNHADTKT) are compositionally biased toward basic and acidic residues. Residues 42 to 53 (PRSPFSPFSPLS) are compositionally biased toward low complexity. The span at 65–75 (KFQQALASSGQ) shows a compositional bias: polar residues. Residues 203 to 425 (HEIATQQLRQ…REMEKKSESN (223 aa)) adopt a coiled-coil conformation. Basic and acidic residues predominate over residues 270–286 (TKTEKSKWEEQKKNEEE). Residues 509–838 (NIRVFCRVRP…LKFAERVSGV (330 aa)) form the Kinesin motor domain. 593–600 (GQTGSGKT) provides a ligand contact to ATP. Residues 847 to 879 (KEGKDVRDLMEQLASLKDTIARKDEEIERLQHQ) adopt a coiled-coil conformation. Disordered regions lie at residues 881-926 (QRLQ…SAEA), 939-977 (AASMGTQGSIDVTKRPPRISDRAKSVTAKSSTSVTRPLD), and 994-1025 (TGLTSSSKGLASSSIKKTGSTSSLAKSSKRWA). Polar residues-rich tracts occupy residues 901 to 913 (SDTGEYSSQSRYS) and 939 to 948 (AASMGTQGSI). The span at 950–962 (VTKRPPRISDRAK) shows a compositional bias: basic and acidic residues. 2 stretches are compositionally biased toward low complexity: residues 963 to 974 (SVTAKSSTSVTR) and 998 to 1016 (SSSKGLASSSIKKTGSTSS).

The protein belongs to the TRAFAC class myosin-kinesin ATPase superfamily. Kinesin family. KIN-14 subfamily.

The protein is Kinesin-like protein KIN-14P of Arabidopsis thaliana (Mouse-ear cress).